A 259-amino-acid polypeptide reads, in one-letter code: UPF0246 protein PSPPH_1119 (259 aa).

This sequence belongs to the UPF0246 family.

This chain is UPF0246 protein PSPPH_1119, found in Pseudomonas savastanoi pv. phaseolicola (strain 1448A / Race 6) (Pseudomonas syringae pv. phaseolicola (strain 1448A / Race 6)).